The sequence spans 329 residues: Beta-ketoacyl-[acyl-carrier-protein] synthase III (329 aa).

Residues cysteine 113 and histidine 256 contribute to the active site. The ACP-binding stretch occupies residues 257–261 (QANQR). Asparagine 286 is a catalytic residue.

It belongs to the thiolase-like superfamily. FabH family. Homodimer.

It localises to the cytoplasm. It carries out the reaction malonyl-[ACP] + acetyl-CoA + H(+) = 3-oxobutanoyl-[ACP] + CO2 + CoA. The protein operates within lipid metabolism; fatty acid biosynthesis. Functionally, catalyzes the condensation reaction of fatty acid synthesis by the addition to an acyl acceptor of two carbons from malonyl-ACP. Catalyzes the first condensation reaction which initiates fatty acid synthesis and may therefore play a role in governing the total rate of fatty acid production. Possesses both acetoacetyl-ACP synthase and acetyl transacylase activities. Its substrate specificity determines the biosynthesis of branched-chain and/or straight-chain of fatty acids. The chain is Beta-ketoacyl-[acyl-carrier-protein] synthase III from Natranaerobius thermophilus (strain ATCC BAA-1301 / DSM 18059 / JW/NM-WN-LF).